A 37-amino-acid chain; its full sequence is uncharacterized protein (37 aa).

Positions 1 to 23 are cleaved as a signal peptide; sequence MLNFSLCLYPVFILNKLVLRTQS.

Belongs to the orthopoxviruses VACWR204.5 protein family.

This is an uncharacterized protein from Vaccinia virus (strain Western Reserve) (VACV).